We begin with the raw amino-acid sequence, 130 residues long: Small ribosomal subunit protein uS8 (130 aa).

This sequence belongs to the universal ribosomal protein uS8 family. Component of the 40S ribosomal subunit. Part of the small subunit (SSU) processome, composed of more than 70 proteins and the RNA chaperone small nucleolar RNA (snoRNA) U3.

It localises to the cytoplasm. It is found in the nucleus. The protein localises to the nucleolus. In terms of biological role, component of the small ribosomal subunit. Part of the small subunit (SSU) processome, first precursor of the small eukaryotic ribosomal subunit. During the assembly of the SSU processome in the nucleolus, many ribosome biogenesis factors, an RNA chaperone and ribosomal proteins associate with the nascent pre-rRNA and work in concert to generate RNA folding, modifications, rearrangements and cleavage as well as targeted degradation of pre-ribosomal RNA by the RNA exosome. Required for erythropoiesis during embryonic development. The chain is Small ribosomal subunit protein uS8 from Danio rerio (Zebrafish).